Consider the following 67-residue polypeptide: Ferredoxin (67 aa).

4Fe-4S ferredoxin-type domains lie at 3–31 (WKVS…MNDE) and 36–67 (PKVE…IEEA). 3 residues coordinate [4Fe-4S] cluster: Cys-12, Asp-15, and Cys-18. Residues Cys-22 and Cys-49 are joined by a disulfide bond. Cys-57 contributes to the [4Fe-4S] cluster binding site.

[4Fe-4S] cluster is required as a cofactor. [3Fe-4S] cluster serves as cofactor.

Ferredoxins are iron-sulfur proteins that transfer electrons in a wide variety of metabolic reactions. The sequence is that of Ferredoxin (fdxA) from Pyrococcus abyssi (strain GE5 / Orsay).